Consider the following 241-residue polypeptide: Octanoyltransferase (241 aa).

One can recognise a BPL/LPL catalytic domain in the interval 43 to 228; sequence ADTPDEIWLV…RLTANLDGSP (186 aa). Substrate contacts are provided by residues 83 to 90, 159 to 161, and 172 to 174; these read RGGQITYH, ALG, and GVS. Residue Cys-190 is the Acyl-thioester intermediate of the active site.

Belongs to the LipB family.

It localises to the cytoplasm. The catalysed reaction is octanoyl-[ACP] + L-lysyl-[protein] = N(6)-octanoyl-L-lysyl-[protein] + holo-[ACP] + H(+). It participates in protein modification; protein lipoylation via endogenous pathway; protein N(6)-(lipoyl)lysine from octanoyl-[acyl-carrier-protein]: step 1/2. Functionally, catalyzes the transfer of endogenously produced octanoic acid from octanoyl-acyl-carrier-protein onto the lipoyl domains of lipoate-dependent enzymes. Lipoyl-ACP can also act as a substrate although octanoyl-ACP is likely to be the physiological substrate. The polypeptide is Octanoyltransferase (Paraburkholderia phytofirmans (strain DSM 17436 / LMG 22146 / PsJN) (Burkholderia phytofirmans)).